A 441-amino-acid polypeptide reads, in one-letter code: Glutamyl-tRNA reductase (441 aa).

Substrate is bound by residues 64–67 (TCNR), Ser123, 128–130 (ETQ), and Gln134. Catalysis depends on Cys65, which acts as the Nucleophile. 203–208 (GAGEMI) lines the NADP(+) pocket.

The protein belongs to the glutamyl-tRNA reductase family. Homodimer.

The enzyme catalyses (S)-4-amino-5-oxopentanoate + tRNA(Glu) + NADP(+) = L-glutamyl-tRNA(Glu) + NADPH + H(+). It functions in the pathway porphyrin-containing compound metabolism; protoporphyrin-IX biosynthesis; 5-aminolevulinate from L-glutamyl-tRNA(Glu): step 1/2. Catalyzes the NADPH-dependent reduction of glutamyl-tRNA(Glu) to glutamate 1-semialdehyde (GSA). This chain is Glutamyl-tRNA reductase, found in Burkholderia pseudomallei (strain K96243).